Reading from the N-terminus, the 311-residue chain is Pyrimidine-specific ribonucleoside hydrolase RihA (311 aa).

The active site involves histidine 240.

This sequence belongs to the IUNH family. RihA subfamily.

Hydrolyzes with equal efficiency cytidine or uridine to ribose and cytosine or uracil, respectively. The sequence is that of Pyrimidine-specific ribonucleoside hydrolase RihA from Escherichia coli (strain K12 / MC4100 / BW2952).